We begin with the raw amino-acid sequence, 141 residues long: Hemoglobin subunit alpha-D (141 aa).

One can recognise a Globin domain in the interval V1–R141. Heme b is bound by residues H58 and H87.

This sequence belongs to the globin family. As to quaternary structure, there are three forms of hemoglobin in Sphenodon: A, A' and D. Hb A is a tetramer of two alpha-A and two beta-1, Hb A' is a tetramer of two alpha-a and two beta-2, Hb D is a tetramer of two alpha-D and two beta-2. In terms of tissue distribution, red blood cells.

Involved in oxygen transport from the lung to the various peripheral tissues. This is Hemoglobin subunit alpha-D (HBAD) from Sphenodon punctatus (Tuatara).